A 275-amino-acid polypeptide reads, in one-letter code: MKRSTPRPARSQAALTTSSEESPDRVERGGDGVATVTDFPDGPPDETGLTPRQRRILDVIRDSVRRRGYPPSMREIGEAVGLTSTSSVAHQLMVLQRKGFLRRDPNRPRAVEIRSAESAVPDASAGHSPAADRAPSARRPPRGPSPIDSNPDVVAVPLVGRIAAGGPALAEQLIEDVVPLPRQLVGEGTLFLLQVKGDSMVDAAICDGDWVVVRQQPVAENGDIVAAMIDGEATVKTFKRRGAHIWLMPHNPQYEPIPGDEATILGRVVAVLRRL.

Residues 1–50 (MKRSTPRPARSQAALTTSSEESPDRVERGGDGVATVTDFPDGPPDETGLT) form a disordered region. Residues 73-93 (MREIGEAVGLTSTSSVAHQLM) constitute a DNA-binding region (H-T-H motif). Positions 114-151 (RSAESAVPDASAGHSPAADRAPSARRPPRGPSPIDSNP) are disordered. Residues Ser-199 and Lys-236 each act as for autocatalytic cleavage activity in the active site.

It belongs to the peptidase S24 family. Homodimer.

It catalyses the reaction Hydrolysis of Ala-|-Gly bond in repressor LexA.. Its function is as follows. Represses a number of genes involved in the response to DNA damage (SOS response), including recA and lexA. In the presence of single-stranded DNA, RecA interacts with LexA causing an autocatalytic cleavage which disrupts the DNA-binding part of LexA, leading to derepression of the SOS regulon and eventually DNA repair. This is LexA repressor from Acidothermus cellulolyticus (strain ATCC 43068 / DSM 8971 / 11B).